Reading from the N-terminus, the 409-residue chain is Dual-specificity RNA methyltransferase RlmN (409 aa).

The active-site Proton acceptor is glutamate 126. One can recognise a Radical SAM core domain in the interval 132 to 373 (EEGRGTLCLS…NQAGYASPIR (242 aa)). A disulfide bridge links cysteine 139 with cysteine 384. 3 residues coordinate [4Fe-4S] cluster: cysteine 146, cysteine 150, and cysteine 153. Residues 210-211 (GE), serine 242, 264-266 (SLH), and asparagine 341 contribute to the S-adenosyl-L-methionine site. Cysteine 384 functions as the S-methylcysteine intermediate in the catalytic mechanism.

The protein belongs to the radical SAM superfamily. RlmN family. [4Fe-4S] cluster is required as a cofactor.

Its subcellular location is the cytoplasm. The catalysed reaction is adenosine(2503) in 23S rRNA + 2 reduced [2Fe-2S]-[ferredoxin] + 2 S-adenosyl-L-methionine = 2-methyladenosine(2503) in 23S rRNA + 5'-deoxyadenosine + L-methionine + 2 oxidized [2Fe-2S]-[ferredoxin] + S-adenosyl-L-homocysteine. It catalyses the reaction adenosine(37) in tRNA + 2 reduced [2Fe-2S]-[ferredoxin] + 2 S-adenosyl-L-methionine = 2-methyladenosine(37) in tRNA + 5'-deoxyadenosine + L-methionine + 2 oxidized [2Fe-2S]-[ferredoxin] + S-adenosyl-L-homocysteine. Functionally, specifically methylates position 2 of adenine 2503 in 23S rRNA and position 2 of adenine 37 in tRNAs. m2A2503 modification seems to play a crucial role in the proofreading step occurring at the peptidyl transferase center and thus would serve to optimize ribosomal fidelity. This Bartonella quintana (strain Toulouse) (Rochalimaea quintana) protein is Dual-specificity RNA methyltransferase RlmN.